Reading from the N-terminus, the 557-residue chain is NAC domain-containing protein 17 (557 aa).

Residues 16 to 166 enclose the NAC domain; it reads SAPGFRFHPT…YYALYKLFKK (151 aa). Residues 115–172 mediate DNA binding; sequence VGLKKTLVFYRGRAPSGERTDWVMHEYTMDEDELGRCKNPQEYYALYKLFKKSGAGPK. A helical membrane pass occupies residues 526-546; the sequence is FLLLSIVGALCAIFWVLVATV.

As to expression, expressed in roots, rosette leaves, cauline leaves, shoot apex, stems and flowers.

The protein localises to the endoplasmic reticulum membrane. The protein resides in the nucleus. Its function is as follows. Transcriptional activator activated by proteolytic cleavage through regulated intramembrane proteolysis (RIP). Transcriptional activator that acts as a positive regulator of AOX1A during mitochondrial dysfunction. Binds directly to AOX1A promoter. Mediates mitochondrial retrograde signaling. The sequence is that of NAC domain-containing protein 17 from Arabidopsis thaliana (Mouse-ear cress).